Here is a 223-residue protein sequence, read N- to C-terminus: Glutathione S-transferase A1 (223 aa).

Residue M1 is modified to N-acetylmethionine. A2 is subject to N-acetylalanine; in Glutathione S-transferase A1, N-terminally processed. The GST N-terminal domain maps to 3–83 (GKPVLHYFNA…YIATKYDLYG (81 aa)). Residue K4 is modified to N6-succinyllysine. Residues Y9, K45, 54–55 (QV), and 67–68 (QT) contribute to the glutathione site. Residues 85-208 (DMKERALIDM…QPGSQRKPPM (124 aa)) enclose the GST C-terminal domain.

The protein belongs to the GST superfamily. Alpha family. As to quaternary structure, homodimer. In terms of tissue distribution, expressed in the liver, skin and kidney.

The enzyme catalyses RX + glutathione = an S-substituted glutathione + a halide anion + H(+). It catalyses the reaction prostaglandin A2 + glutathione = prostaglandin A2-S-(R)-glutathione. It carries out the reaction prostaglandin J2 + glutathione = prostaglandin J2-S-(R)-glutathione. The catalysed reaction is (13S)-hydroperoxy-(9Z,11E)-octadecadienoate + 2 glutathione = (13S)-hydroxy-(9Z,11E)-octadecadienoate + glutathione disulfide + H2O. The enzyme catalyses androst-5-ene-3,17-dione = androst-4-ene-3,17-dione. Glutathione S-transferase that catalyzes the nucleophilic attack of the sulfur atom of glutathione on the electrophilic groups of a wide range of exogenous and endogenous compounds. Involved in the formation of glutathione conjugates of both prostaglandin A2 (PGA2) and prostaglandin J2 (PGJ2). It also catalyzes the isomerization of D5-androstene-3,17-dione (AD) into D4-androstene-3,17-dione and may therefore play an important role in hormone biosynthesis. Through its glutathione-dependent peroxidase activity toward the fatty acid hydroperoxide (13S)-hydroperoxy-(9Z,11E)-octadecadienoate/13-HPODE it is also involved in the metabolism of oxidized linoleic acid. The polypeptide is Glutathione S-transferase A1 (Gsta1) (Mus musculus (Mouse)).